A 2671-amino-acid polypeptide reads, in one-letter code: Inositol 1,4,5-trisphosphate-gated calcium channel ITPR3 (2671 aa).

Residues 1–2202 (MSEMSSFLHI…LIYWFSRRMT (2202 aa)) are Cytoplasmic-facing. MIR domains are found at residues 113 to 173 (GDVV…LRSN), 174 to 224 (GDNV…INLF), 232 to 288 (EEVL…VEVV), 295 to 372 (GGAG…LDPT), and 378 to 434 (DSFV…IVSV). 1D-myo-inositol 1,4,5-trisphosphate is bound by residues Arg266, Thr268, Leu269, and Arg270. The interval 322 to 342 (SYKGDASDPKAAGMGAQGRTG) is disordered. 1D-myo-inositol 1,4,5-trisphosphate contacts are provided by Arg503, Lys507, Arg510, Tyr567, Arg568, and Lys569. Arg743 lines the Ca(2+) pocket. Phosphoserine is present on residues Ser916 and Ser934. Ca(2+)-binding residues include Glu1122 and Glu1125. Disordered regions lie at residues 1132–1163 (GSGKGEEVEAGAAKDKKERPTDEEGFLHPPGE) and 1809–1848 (NDLGSQPHEDREPVDPTTKGRVASFSIPGSSSRYSLGPSL). Residues Ser1813, Ser1832, and Ser1834 each carry the phosphoserine modification. The Ca(2+) site is built by Glu1882 and Glu1946. Residues Ala1996, Glu2149, and Lys2152 each contribute to the ATP site. The chain crosses the membrane as a helical span at residues 2203–2223 (LWGSISFNLAVFINIIIAFFY). The Extracellular segment spans residues 2224 to 2235 (PYMEGASTGVLD). A helical membrane pass occupies residues 2236–2256 (SPLISLLFWILICFSIAALFT). Residues 2257–2264 (KRYSIRPL) lie on the Cytoplasmic side of the membrane. Residues 2265-2285 (IVALILRSIYYLGIGPTLNIL) traverse the membrane as a helical segment. The Extracellular portion of the chain corresponds to 2286 to 2325 (GALNLTNKIVFVVSFVGNRGTFIRGYKAMVMDMEFLYHVG). A helical transmembrane segment spans residues 2326 to 2346 (YILTSVLGLFAHELFYSILLF). Topologically, residues 2347–2368 (DLIYREETLFNVIKSVTRNGRS) are cytoplasmic. Residues 2369-2389 (ILLTALLALILVYLFSIVGFL) traverse the membrane as a helical segment. Residues 2390-2496 (FLKDDFILEV…ESLFPARVVY (107 aa)) lie on the Extracellular side of the membrane. Cys2455 and Cys2461 are disulfide-bonded. A helical transmembrane segment spans residues 2497–2517 (DLLFFFIVIIIVLNLIFGVII). Residues 2518–2671 (DTFADLRSEK…FVDVQNCISR (154 aa)) are Cytoplasmic-facing. Positions 2538 and 2539 each coordinate ATP. Cys2538 is a binding site for Zn(2+). 2 residues coordinate Zn(2+): Cys2541 and His2558. ATP is bound by residues Lys2560, His2563, Asn2564, and Met2565. Zn(2+) is bound at residue His2563. Thr2581 serves as a coordination point for Ca(2+). Phosphoserine is present on residues Ser2609 and Ser2670.

The protein belongs to the InsP3 receptor family. Homotetramer. Homodimer. Interacts with TRPC1, TRPC3 and TRPC4. Interacts with TRPV4. Interacts with SIGMAR1. Interacts with PML and AKT1. Interacts with IRAG2 (via coiled-coil domain). Interacts with CABP1. Interacts with TMBIM4/LFG4. Interacts with CEMIP. Interacts with TESPA1. Interacts with TMEM203. Interacts with BOK; regulates ITPR3 expression. Interacts with BCL2L10. Interacts with CHGA and CHGB. Phosphorylated by AKT1 on serine and/or threonine residues. In terms of tissue distribution, expressed in intestinal crypt and villus epithelial cells.

Its subcellular location is the endoplasmic reticulum membrane. It is found in the cytoplasmic vesicle. The protein resides in the secretory vesicle membrane. It carries out the reaction Ca(2+)(in) = Ca(2+)(out). With respect to regulation, inositol 1,4,5-trisphosphate-gated calcium channel is regulated by cytosolic calcium in a biphasic manner. At low concentrations, cytosolic calcium binds at a high-affinity juxtamembrane domain (JD) calcium binding site, allowing ITPR3 to activate by escaping a low-energy resting state through an ensemble of preactivated states. At high cytosolic calcium concentrations, ITPR3 preferentially enters an inhibited state stabilized by calcium binding at a second, low-affinity cytoplasmic domain (CD) calcium binding site. Functionally, inositol 1,4,5-trisphosphate-gated calcium channel that, upon 1D-myo-inositol 1,4,5-trisphosphate binding, transports calcium from the endoplasmic reticulum lumen to cytoplasm, thus releasing the intracellular calcium and therefore participates in cellular calcium ion homeostasis. 1D-myo-inositol 1,4,5-trisphosphate binds to the ligand-free channel without altering its global conformation, yielding the low-energy resting state, then progresses through resting-to preactivated transitions to the higher energy preactivated state, which increases affinity for calcium, promoting binding of the low basal cytosolic calcium at the juxtamembrane domain (JD) site, favoring the transition through the ensemble of high-energy intermediate states along the trajectory to the fully-open activated state. Upon opening, releases calcium in the cytosol where it can bind to the low-affinity cytoplasmic domain (CD) site and stabilizes the inhibited state to terminate calcium release. The polypeptide is Inositol 1,4,5-trisphosphate-gated calcium channel ITPR3 (Homo sapiens (Human)).